We begin with the raw amino-acid sequence, 132 residues long: Spermatogenesis-associated protein 33 (132 aa).

Residues 1 to 60 (MGQSKSKPREKKEEEKSTTTLVTKSKEKVMEKEAKQSDKESQPAESLLFATSKHSRPSSS) are interaction with ATG16L1. The disordered stretch occupies residues 1 to 81 (MGQSKSKPRE…SKKRSVIPQI (81 aa)). The segment covering 24 to 42 (KSKEKVMEKEAKQSDKESQ) has biased composition (basic and acidic residues). Residues 61 to 132 (SEDKPETKQR…IAAYDVHNTE (72 aa)) form an interaction with VDAC2 region. The PQIIIT signature appears at 79-84 (PQIIIT). Serine 87 carries the post-translational modification Phosphoserine. Residues 110–132 (DWGPYHRHRSPSTIAAYDVHNTE) are disordered.

Interacts (via PQIIIT motif) with PPP3R2 and PPP3CC. Interacts with VDAC2. Interacts with ATG16L1 (via WD repeats). Interacts with PPP3R1, PPP3CA and PPP3CB. Predominantly expressed in the testis (at protein level). Expressed in the sperm midpiece (at protein level).

The protein localises to the cytoplasm. Its subcellular location is the cytosol. The protein resides in the nucleus. It is found in the mitochondrion. Plays an important role in sperm motility and male fertility. Required for sperm midpiece flexibility and for the localization of sperm calcineurin to the mitochondria. Promotes mitophagy as well as acts as an autophagy mediator in male germline cells. Links damaged mitochondria to autophagosomes via its binding to the outer mitochondrial membrane protein VDAC2, as well as to key autophagy machinery component ATG16L1. This is Spermatogenesis-associated protein 33 (Spata33) from Mus musculus (Mouse).